The chain runs to 622 residues: Chaperone protein HscA homolog (622 aa).

This sequence belongs to the heat shock protein 70 family.

Functionally, chaperone involved in the maturation of iron-sulfur cluster-containing proteins. Has a low intrinsic ATPase activity which is markedly stimulated by HscB. In Pseudoalteromonas atlantica (strain T6c / ATCC BAA-1087), this protein is Chaperone protein HscA homolog.